Consider the following 248-residue polypeptide: Phosphomannomutase (248 aa).

The Nucleophile role is filled by Asp14. Residues Asp14 and Asp16 each contribute to the Mg(2+) site. Asp16 acts as the Proton donor/acceptor in catalysis. Residues Arg23, Arg125, Arg136, Arg143, Ser181, and Asp183 each contribute to the alpha-D-mannose 1-phosphate site. Mg(2+) is bound by residues Asp209, Phe221, and Thr226.

This sequence belongs to the eukaryotic PMM family. As to quaternary structure, homodimer. It depends on Mg(2+) as a cofactor.

It localises to the cytoplasm. The catalysed reaction is alpha-D-mannose 1-phosphate = D-mannose 6-phosphate. Its pathway is nucleotide-sugar biosynthesis; GDP-alpha-D-mannose biosynthesis; alpha-D-mannose 1-phosphate from D-fructose 6-phosphate: step 2/2. Functionally, catalyzes the interconversion of mannose-6-phosphate to mannose-1-phosphate, the precursor for the synthesis of GDP-mannose. GDP-mannose is an essential sugar nucleotide for the synthesis of D-mannose-containing cell wall polysaccharides (galactomannans and glucomannans), glycolipids, glycoproteins and the antioxidant L-ascorbate. The protein is Phosphomannomutase of Oryza sativa subsp. indica (Rice).